We begin with the raw amino-acid sequence, 398 residues long: Phosphoglycerate kinase (398 aa).

Residues 21–23 (DFN), Arg-36, 59–62 (HLGR), Arg-119, and Arg-157 each bind substrate. Residues Lys-208, Gly-296, Glu-327, and 354 to 357 (GGDS) each bind ATP.

The protein belongs to the phosphoglycerate kinase family. In terms of assembly, monomer.

It localises to the cytoplasm. It catalyses the reaction (2R)-3-phosphoglycerate + ATP = (2R)-3-phospho-glyceroyl phosphate + ADP. The protein operates within carbohydrate degradation; glycolysis; pyruvate from D-glyceraldehyde 3-phosphate: step 2/5. This is Phosphoglycerate kinase from Streptococcus pyogenes serotype M18 (strain MGAS8232).